We begin with the raw amino-acid sequence, 625 residues long: Phosphomethylpyrimidine synthase (625 aa).

Substrate is bound by residues N230, M259, Y288, H324, 344–346 (SRG), 385–388 (DGLR), and E424. Residue H428 coordinates Zn(2+). Residue Y451 participates in substrate binding. Zn(2+) is bound at residue H492. 3 residues coordinate [4Fe-4S] cluster: C572, C575, and C580.

This sequence belongs to the ThiC family. Homodimer. The cofactor is [4Fe-4S] cluster.

The enzyme catalyses 5-amino-1-(5-phospho-beta-D-ribosyl)imidazole + S-adenosyl-L-methionine = 4-amino-2-methyl-5-(phosphooxymethyl)pyrimidine + CO + 5'-deoxyadenosine + formate + L-methionine + 3 H(+). It participates in cofactor biosynthesis; thiamine diphosphate biosynthesis. Functionally, catalyzes the synthesis of the hydroxymethylpyrimidine phosphate (HMP-P) moiety of thiamine from aminoimidazole ribotide (AIR) in a radical S-adenosyl-L-methionine (SAM)-dependent reaction. The protein is Phosphomethylpyrimidine synthase of Xanthomonas oryzae pv. oryzae (strain MAFF 311018).